We begin with the raw amino-acid sequence, 55 residues long: Cicadin (55 aa).

Residues 1-26 (NEYHGFVDKANNENKRKKQQGRDDFV) are compositionally biased toward basic and acidic residues. Positions 1 to 39 (NEYHGFVDKANNENKRKKQQGRDDFVVKPNNFANRRRKD) are disordered.

Its function is as follows. Possesses antifungal activity against B.cinerea, M.arachidicola, F.oxysporum, R.solani and C.comatus. Functionally, suppresses the activity of HIV-1 reverse transcriptase and stimulates the proliferation of murine splenocytes. The polypeptide is Cicadin (Cicada flammata).